The primary structure comprises 117 residues: Large ribosomal subunit protein bL20c (117 aa).

The protein belongs to the bacterial ribosomal protein bL20 family.

It localises to the plastid. Its subcellular location is the chloroplast. Binds directly to 23S ribosomal RNA and is necessary for the in vitro assembly process of the 50S ribosomal subunit. It is not involved in the protein synthesizing functions of that subunit. This Acorus calamus (Sweet flag) protein is Large ribosomal subunit protein bL20c.